A 294-amino-acid chain; its full sequence is 4-hydroxy-tetrahydrodipicolinate synthase (294 aa).

Position 47 (threonine 47) interacts with pyruvate. Tyrosine 135 serves as the catalytic Proton donor/acceptor. Lysine 163 acts as the Schiff-base intermediate with substrate in catalysis. Valine 205 contributes to the pyruvate binding site.

Belongs to the DapA family. Homotetramer; dimer of dimers.

It localises to the cytoplasm. It carries out the reaction L-aspartate 4-semialdehyde + pyruvate = (2S,4S)-4-hydroxy-2,3,4,5-tetrahydrodipicolinate + H2O + H(+). The protein operates within amino-acid biosynthesis; L-lysine biosynthesis via DAP pathway; (S)-tetrahydrodipicolinate from L-aspartate: step 3/4. Functionally, catalyzes the condensation of (S)-aspartate-beta-semialdehyde [(S)-ASA] and pyruvate to 4-hydroxy-tetrahydrodipicolinate (HTPA). This is 4-hydroxy-tetrahydrodipicolinate synthase from Rickettsia canadensis (strain McKiel).